We begin with the raw amino-acid sequence, 743 residues long: Cytosolic neutral trehalase (743 aa).

Positions 95, 97, 99, 101, and 106 each coordinate Ca(2+). Substrate contacts are provided by residues arginine 285, 292 to 293 (WD), asparagine 329, 338 to 340 (RSQ), glutamate 405, arginine 454, and glycine 457. Active-site proton donor/acceptor residues include aspartate 459 and glutamate 664.

The protein belongs to the glycosyl hydrolase 37 family. Ca(2+) serves as cofactor.

The protein localises to the cytoplasm. The enzyme catalyses alpha,alpha-trehalose + H2O = alpha-D-glucose + beta-D-glucose. The protein operates within carbohydrate degradation. In terms of biological role, hydrolyzes intracellular trehalose to glucose. The polypeptide is Cytosolic neutral trehalase (Beauveria bassiana (strain ARSEF 2860) (White muscardine disease fungus)).